The primary structure comprises 230 residues: ATP synthase subunit a 1 (230 aa).

5 helical membrane-spanning segments follow: residues 20–40, 78–98, 112–132, 174–194, and 195–215; these read ATIV…WLIT, FLPF…LTIF, AALA…NVGI, LLVA…MTLF, and GLLV…VYIA.

The protein belongs to the ATPase A chain family. As to quaternary structure, F-type ATPases have 2 components, CF(1) - the catalytic core - and CF(0) - the membrane proton channel. CF(1) has five subunits: alpha(3), beta(3), gamma(1), delta(1), epsilon(1). CF(0) has four main subunits: a, b, b' and c.

The protein resides in the cellular thylakoid membrane. Key component of the proton channel; it plays a direct role in the translocation of protons across the membrane. In Crocosphaera subtropica (strain ATCC 51142 / BH68) (Cyanothece sp. (strain ATCC 51142)), this protein is ATP synthase subunit a 1.